Consider the following 114-residue polypeptide: BolA-like protein DDB_G0274169 (114 aa).

Residues 88–98 (TQWKKNNQTKI) show a composition bias toward polar residues. The disordered stretch occupies residues 88–114 (TQWKKNNQTKINVDDDKSPSCKGGFGK).

The protein belongs to the BolA/IbaG family.

The sequence is that of BolA-like protein DDB_G0274169 from Dictyostelium discoideum (Social amoeba).